The sequence spans 200 residues: ATP-dependent Clp protease proteolytic subunit 1 (200 aa).

Catalysis depends on Ser98, which acts as the Nucleophile. Residue His123 is part of the active site.

Belongs to the peptidase S14 family. Fourteen ClpP subunits assemble into 2 heptameric rings which stack back to back to give a disk-like structure with a central cavity, resembling the structure of eukaryotic proteasomes.

The protein resides in the cytoplasm. It catalyses the reaction Hydrolysis of proteins to small peptides in the presence of ATP and magnesium. alpha-casein is the usual test substrate. In the absence of ATP, only oligopeptides shorter than five residues are hydrolyzed (such as succinyl-Leu-Tyr-|-NHMec, and Leu-Tyr-Leu-|-Tyr-Trp, in which cleavage of the -Tyr-|-Leu- and -Tyr-|-Trp bonds also occurs).. Cleaves peptides in various proteins in a process that requires ATP hydrolysis. Has a chymotrypsin-like activity. Plays a major role in the degradation of misfolded proteins. The chain is ATP-dependent Clp protease proteolytic subunit 1 from Mycobacterium bovis (strain ATCC BAA-935 / AF2122/97).